A 203-amino-acid chain; its full sequence is High frequency lysogenization protein HflD homolog (203 aa).

Belongs to the HflD family.

Its subcellular location is the cytoplasm. The protein localises to the cell inner membrane. This chain is High frequency lysogenization protein HflD homolog, found in Vesicomyosocius okutanii subsp. Calyptogena okutanii (strain HA).